Reading from the N-terminus, the 260-residue chain is Lys-63-specific deubiquitinase BRCC36 (260 aa).

The MPN domain maps to 6-149 (VHLESDAFLV…YTCFQSVQAQ (144 aa)). Zn(2+) is bound by residues His92, His94, and Asp105. The short motif at 92–105 (HSHPHITVWPSHVD) is the JAMM motif element.

The protein belongs to the peptidase M67A family. BRCC36 subfamily. In terms of assembly, component of the BRCA1-A complex, at least composed of brca1, bard1, uimc1/rap80, abraxas1, brcc3/brcc36, babam2 and babam1/nba1. In the BRCA1-A complex, interacts directly with abraxas1 and babam2. Component of the BRISC complex, at least composed of abraxas2, brcc3/brcc36, babam2 and babam1/nba1. Within the complex, interacts directly with abraxas2. Both the BRCA1-A complex and the BRISC complex bind polyubiquitin. Requires Zn(2+) as cofactor.

It is found in the nucleus. It localises to the cytoplasm. The protein localises to the cytoskeleton. Its subcellular location is the spindle pole. In terms of biological role, metalloprotease that specifically cleaves 'Lys-63'-linked polyubiquitin chains. Does not have activity toward 'Lys-48'-linked polyubiquitin chains. Component of the BRCA1-A complex, a complex that specifically recognizes 'Lys-63'-linked ubiquitinated histones H2A and H2AX at DNA lesions sites, leading to target the brca1-bard1 heterodimer to sites of DNA damage at double-strand breaks (DSBs). In the BRCA1-A complex, it specifically removes 'Lys-63'-linked ubiquitin on histones H2A and H2AX, antagonizing the rnf8-dependent ubiquitination at double-strand breaks (DSBs). Catalytic subunit of the BRISC complex, a multiprotein complex that specifically cleaves 'Lys-63'-linked ubiquitin in various substrates. Mediates the specific 'Lys-63'-specific deubiquitination associated with the COP9 signalosome complex (CSN), via the interaction of the BRISC complex with the CSN complex. The BRISC complex is required for normal mitotic spindle assembly and microtubule attachment to kinetochores via its role in deubiquitinating numa1. Plays a role in interferon signaling via its role in the deubiquitination of the interferon receptor ifnar1; deubiquitination increases ifnar1 activity by enhancing its stability and cell surface expression. Acts as a regulator of the NLRP3 inflammasome by mediating deubiquitination of nlrp3. Down-regulates the response to bacterial lipopolysaccharide (LPS) via its role in ifnar1 deubiquitination. The polypeptide is Lys-63-specific deubiquitinase BRCC36 (brcc3) (Salmo salar (Atlantic salmon)).